Consider the following 622-residue polypeptide: Membrane protein insertase YidC (622 aa).

The helical transmembrane segment at 8-28 threads the bilayer; the sequence is LFLALILSMGIWMGVNYFFFP. Residues 33–61 show a composition bias toward basic and acidic residues; sequence KTSETKEVKVDKPSDDKQDQIQKEKKESR. Positions 33 to 70 are disordered; the sequence is KTSETKEVKVDKPSDDKQDQIQKEKKESRTTIPSKGTK. Transmembrane regions (helical) follow at residues 413–433, 484–504, 532–552, and 571–591; these read FTIPNYGWSIIIFAILFKLVF, VGGCLPMVIQIPIFIALYTAF, AIPYFTQTGIGLNLLALLMVG, and MLMYVMPVMMLYIFWNMPSGV.

Belongs to the OXA1/ALB3/YidC family. Type 1 subfamily. As to quaternary structure, interacts with the Sec translocase complex via SecD. Specifically interacts with transmembrane segments of nascent integral membrane proteins during membrane integration.

It is found in the cell inner membrane. Functionally, required for the insertion and/or proper folding and/or complex formation of integral membrane proteins into the membrane. Involved in integration of membrane proteins that insert both dependently and independently of the Sec translocase complex, as well as at least some lipoproteins. Aids folding of multispanning membrane proteins. This Leptospira borgpetersenii serovar Hardjo-bovis (strain JB197) protein is Membrane protein insertase YidC.